The following is a 409-amino-acid chain: uncharacterized protein (409 aa).

Basic and acidic residues predominate over residues 36-50 (HLKAKARAQESDSDR). 3 disordered regions span residues 36 to 67 (HLKAKARAQESDSDRPCSSIESSSEPASTFSS), 239 to 298 (IENT…SSTI), and 338 to 373 (RSQIKGKDSEGRRKIQRRHKKPLAEEEADPTLTGPR). Positions 51 to 67 (PCSSIESSSEPASTFSS) are enriched in low complexity. Residues 245-265 (VREESNQEHPPGKQEKTEKHP) show a composition bias toward basic and acidic residues. Residues 268–281 (LQGSHQAEPETSSK) show a composition bias toward polar residues. 2 stretches are compositionally biased toward basic and acidic residues: residues 282-294 (NSEEYEKSLKMDD) and 338-350 (RSQIKGKDSEGRR).

This is an uncharacterized protein from Homo sapiens (Human).